A 242-amino-acid polypeptide reads, in one-letter code: 7-cyano-7-deazaguanine synthase (242 aa).

ATP is bound at residue 14–24 (FSGGQDSATCL). Zn(2+)-binding residues include Cys202, Cys217, Cys220, and Cys223.

The protein belongs to the QueC family. The cofactor is Zn(2+).

It carries out the reaction 7-carboxy-7-deazaguanine + NH4(+) + ATP = 7-cyano-7-deazaguanine + ADP + phosphate + H2O + H(+). It functions in the pathway purine metabolism; 7-cyano-7-deazaguanine biosynthesis. In terms of biological role, catalyzes the ATP-dependent conversion of 7-carboxy-7-deazaguanine (CDG) to 7-cyano-7-deazaguanine (preQ(0)). The polypeptide is 7-cyano-7-deazaguanine synthase (Rhodopseudomonas palustris (strain BisA53)).